The following is a 238-amino-acid chain: Ribonuclease PH (238 aa).

Phosphate-binding positions include Arg86 and 124–126 (GTR).

The protein belongs to the RNase PH family. Homohexameric ring arranged as a trimer of dimers.

It carries out the reaction tRNA(n+1) + phosphate = tRNA(n) + a ribonucleoside 5'-diphosphate. Functionally, phosphorolytic 3'-5' exoribonuclease that plays an important role in tRNA 3'-end maturation. Removes nucleotide residues following the 3'-CCA terminus of tRNAs; can also add nucleotides to the ends of RNA molecules by using nucleoside diphosphates as substrates, but this may not be physiologically important. Probably plays a role in initiation of 16S rRNA degradation (leading to ribosome degradation) during starvation. The protein is Ribonuclease PH of Salmonella choleraesuis (strain SC-B67).